A 240-amino-acid chain; its full sequence is Uridylate kinase (240 aa).

Residue 13–16 coordinates ATP; the sequence is KLSG. Residues 21–26 form an involved in allosteric activation by GTP region; it reads GEKGFG. Residue G55 coordinates UMP. Residues G56 and R60 each coordinate ATP. Residues D75 and 136–143 each bind UMP; that span reads IGNPYFST. ATP is bound by residues N164, Y170, and D173.

It belongs to the UMP kinase family. Homohexamer.

The protein localises to the cytoplasm. It catalyses the reaction UMP + ATP = UDP + ADP. It participates in pyrimidine metabolism; CTP biosynthesis via de novo pathway; UDP from UMP (UMPK route): step 1/1. Its activity is regulated as follows. Allosterically activated by GTP. Inhibited by UTP. In terms of biological role, catalyzes the reversible phosphorylation of UMP to UDP. This chain is Uridylate kinase, found in Staphylococcus aureus (strain USA300).